We begin with the raw amino-acid sequence, 257 residues long: MADPGPFVADLRAESDDLDALVAHLPADRWADPTPAPGWTIAHQIGHLLWTDRVALTAVTDEAGFAELMTAAAANPAGFVDDAATELAAVSPAELLTDWRVTRGRLHEELLAVPDGRKLAWFGPPMSAASMATARLMETWAHGLDVADALGVIRPATQRLRSIAHLGVRTRDYAFIVNNLTPPAEPFLVELRGPSGDTWSWGPSDAAQRVTGSAEDFCFLVTQRRALSTLDVNAVGEDAQRWLTIAQAFAGPPGRGR.

This is an uncharacterized protein from Mycobacterium tuberculosis (strain CDC 1551 / Oshkosh).